Here is a 249-residue protein sequence, read N- to C-terminus: Tetrahydromethanopterin S-methyltransferase subunit A (249 aa).

The Cytoplasmic portion of the chain corresponds to 1 to 227 (MADKKEVIQN…KISSGYYAGK (227 aa)). Histidine 84 lines the 5-hydroxybenzimidazolylcob(I)amide pocket. A helical transmembrane segment spans residues 228 to 248 (IEGIVIGFILTLVFLIIIIQG). Position 249 (leucine 249) is a topological domain, extracellular.

Belongs to the MtrA family. The complex is composed of 8 subunits; MtrA, MtrB, MtrC, MtrD, MtrE, MtrF, MtrG and MtrH. 5-hydroxybenzimidazolylcob(I)amide serves as cofactor.

It is found in the cell membrane. It carries out the reaction 5-methyl-5,6,7,8-tetrahydromethanopterin + coenzyme M + 2 Na(+)(in) = 5,6,7,8-tetrahydromethanopterin + methyl-coenzyme M + 2 Na(+)(out). The protein operates within one-carbon metabolism; methanogenesis from CO(2); methyl-coenzyme M from 5,10-methylene-5,6,7,8-tetrahydromethanopterin: step 2/2. Part of a complex that catalyzes the formation of methyl-coenzyme M and tetrahydromethanopterin from coenzyme M and methyl-tetrahydromethanopterin. This is an energy-conserving, sodium-ion translocating step. In Methanosphaera stadtmanae (strain ATCC 43021 / DSM 3091 / JCM 11832 / MCB-3), this protein is Tetrahydromethanopterin S-methyltransferase subunit A.